A 334-amino-acid chain; its full sequence is Ornithine carbamoyltransferase (334 aa).

Carbamoyl phosphate contacts are provided by residues Ser-57–Thr-60, Gln-84, Arg-108, and His-135–Gln-138. Residues Asn-168, Asp-233, and Ser-237 to Met-238 each bind L-ornithine. Residues Cys-275–Leu-276 and Arg-320 each bind carbamoyl phosphate.

The protein belongs to the aspartate/ornithine carbamoyltransferase superfamily. OTCase family.

The protein localises to the cytoplasm. It carries out the reaction carbamoyl phosphate + L-ornithine = L-citrulline + phosphate + H(+). It participates in amino-acid biosynthesis; L-arginine biosynthesis; L-arginine from L-ornithine and carbamoyl phosphate: step 1/3. Reversibly catalyzes the transfer of the carbamoyl group from carbamoyl phosphate (CP) to the N(epsilon) atom of ornithine (ORN) to produce L-citrulline. The chain is Ornithine carbamoyltransferase from Thermobifida fusca (strain YX).